The chain runs to 218 residues: Ras-related protein RABA5e (218 aa).

Residue 19–26 (GDSAVGKS) participates in GTP binding. The short motif at 41 to 49 (SKATIGVEF) is the Effector region element. Residues 67–71 (DTAGQ), 125–128 (NKCD), and 155–156 (SA) contribute to the GTP site. 2 S-geranylgeranyl cysteine lipidation sites follow: cysteine 214 and cysteine 215. Cysteine 215 carries the cysteine methyl ester modification. The propeptide at 216–218 (SST) is removed in mature form.

It belongs to the small GTPase superfamily. Rab family.

Its subcellular location is the cell membrane. Functionally, intracellular vesicle trafficking and protein transport. This is Ras-related protein RABA5e (RABA5E) from Arabidopsis thaliana (Mouse-ear cress).